A 176-amino-acid chain; its full sequence is Cytochrome b (176 aa).

3 helical membrane passes run 33–53 (FGSL…FLAM), 77–98 (WMLR…YLHV), and 113–133 (WNVG…GYVL). Heme b-binding residues include histidine 83 and histidine 97.

The protein belongs to the cytochrome b family. As to quaternary structure, the cytochrome bc1 complex contains 11 subunits: 3 respiratory subunits (MT-CYB, CYC1 and UQCRFS1), 2 core proteins (UQCRC1 and UQCRC2) and 6 low-molecular weight proteins (UQCRH/QCR6, UQCRB/QCR7, UQCRQ/QCR8, UQCR10/QCR9, UQCR11/QCR10 and a cleavage product of UQCRFS1). This cytochrome bc1 complex then forms a dimer. Heme b serves as cofactor.

Its subcellular location is the mitochondrion inner membrane. Its function is as follows. Component of the ubiquinol-cytochrome c reductase complex (complex III or cytochrome b-c1 complex) that is part of the mitochondrial respiratory chain. The b-c1 complex mediates electron transfer from ubiquinol to cytochrome c. Contributes to the generation of a proton gradient across the mitochondrial membrane that is then used for ATP synthesis. The chain is Cytochrome b (MT-CYB) from Idionycteris phyllotis (Allen's big-eared bat).